Here is a 417-residue protein sequence, read N- to C-terminus: MAP kinase-interacting serine/threonine-protein kinase 1 (417 aa).

The tract at residues Met-1–Arg-20 is disordered. The region spanning Arg-37–Leu-321 is the Protein kinase domain. Residues Leu-43–Val-51 and Lys-66 contribute to the ATP site. Catalysis depends on Asp-158, which acts as the Proton acceptor. Residues Ala-397–Thr-417 are disordered. Residues Leu-406 to Thr-417 are compositionally biased toward polar residues.

The protein belongs to the protein kinase superfamily. CAMK Ser/Thr protein kinase family. Requires Mg(2+) as cofactor.

The catalysed reaction is L-seryl-[protein] + ATP = O-phospho-L-seryl-[protein] + ADP + H(+). It carries out the reaction L-threonyl-[protein] + ATP = O-phospho-L-threonyl-[protein] + ADP + H(+). Functionally, may play a role in the response to environmental stress and cytokines. Appears to regulate translation by phosphorylating EIF4E, thus increasing the affinity of this protein for the 7-methylguanosine-containing mRNA cap. This chain is MAP kinase-interacting serine/threonine-protein kinase 1 (mknk1), found in Xenopus tropicalis (Western clawed frog).